A 198-amino-acid polypeptide reads, in one-letter code: DnaJ homolog subfamily C member 12 (198 aa).

Position 1 is an N-acetylmethionine (M1). A J domain is found at 14–79; sequence DYYALLGCDE…ESRARYDHWR (66 aa). The disordered stretch occupies residues 114-177; sequence EGSGQTFTSS…GLSDLNCGHL (64 aa). A compositionally biased stretch (polar residues) spans 116–125; sequence SGQTFTSSVP. Residues 126–156 are compositionally biased toward basic and acidic residues; it reads NKERSEQRETKKGDPDSNPEKMKQKEPKFPE. Phosphoserine occurs at positions 160, 166, and 182.

As to quaternary structure, interacts with HSPA8. Interacts with TPH1. Interacts with TPH2. As to expression, highest levels of expression are detected in kidney, pineal gland, and raphe nuclei in the brain where it localizes to serotonerigic neurons.

The protein resides in the cytoplasm. Its function is as follows. Probable co-chaperone that participates in the proper folding of biopterin-dependent aromatic amino acid hydroxylases, which include phenylalanine-4-hydroxylase (PAH), tyrosine 3-monooxygenase (TH) and peripheral and neuronal tryptophan hydroxylases (TPH1 and TPH2). The protein is DnaJ homolog subfamily C member 12 (Dnajc12) of Mus musculus (Mouse).